Reading from the N-terminus, the 329-residue chain is Carrier protein YMC2, mitochondrial (329 aa).

The tract at residues 1-27 (MSEEFPTPQLLDELEDQQKVTTPNEKR) is disordered. A mitochondrion-targeting transit peptide spans 1–33 (MSEEFPTPQLLDELEDQQKVTTPNEKRELSSNR). Solcar repeat units lie at residues 34–115 (VLKD…MKRF), 143–226 (SQYY…LVAR), and 238–325 (PPWK…VMRF). The next 6 helical transmembrane spans lie at 38 to 58 (IFAG…FDTT), 84 to 104 (VFAF…CVSV), 140 to 160 (LPLS…SFLA), 205 to 225 (TMIR…ALVA), 243 to 263 (CLFG…LDVV), and 297 to 318 (FFKG…TFLT).

This sequence belongs to the mitochondrial carrier (TC 2.A.29) family.

It is found in the mitochondrion inner membrane. In Saccharomyces cerevisiae (strain ATCC 204508 / S288c) (Baker's yeast), this protein is Carrier protein YMC2, mitochondrial (YMC2).